A 143-amino-acid polypeptide reads, in one-letter code: Putative transcriptional regulatory protein PH0763 (143 aa).

It belongs to the Tfx family.

Putative transcriptional regulator. The chain is Putative transcriptional regulatory protein PH0763 from Pyrococcus horikoshii (strain ATCC 700860 / DSM 12428 / JCM 9974 / NBRC 100139 / OT-3).